The primary structure comprises 186 residues: Ribosome-recycling factor (186 aa).

Belongs to the RRF family.

Its subcellular location is the cytoplasm. In terms of biological role, responsible for the release of ribosomes from messenger RNA at the termination of protein biosynthesis. May increase the efficiency of translation by recycling ribosomes from one round of translation to another. The protein is Ribosome-recycling factor of Methylibium petroleiphilum (strain ATCC BAA-1232 / LMG 22953 / PM1).